The sequence spans 317 residues: Ubiquinone biosynthesis protein COQ9-A, mitochondrial (317 aa).

The transit peptide at 1–46 (MAASVTRVLKGAGGRQLLLMVARRRPVLMQPFLLMPRKFWVSSALR) directs the protein to the mitochondrion. Positions 50 to 97 (QRQPPFSASSTHAETQGHAEEQYQQKQPPPRYTDQAGEESEGYESEEQ) are disordered. A compositionally biased stretch (polar residues) spans 53-63 (PPFSASSTHAE). Residues 85-96 (AGEESEGYESEE) are compositionally biased toward acidic residues. Arginine 243 serves as a coordination point for a 1,2-diacylglycero-3-phosphoethanolamine.

It belongs to the COQ9 family. In terms of assembly, homodimer. Heterodimer; two heterodimers of COQ7:COQ9 come together on the same side of the lipid pseudo-bilayer and form a curved tetramer with a hydrophobic surface suitable for membrane interaction. These two tetramers assemble into a soluble octamer with a pseudo-bilayer of lipids captured within. Interacts with COQ7; this interaction allows ubiquinone (CoQ) isoprene intermediates presentation to COQ7 and facilitates the COQ7-mediated hydroxylase step.

It is found in the mitochondrion. It participates in cofactor biosynthesis; ubiquinone biosynthesis. Functionally, membrane-associated protein that warps the membrane surface to access and bind aromatic isoprenes with high specificity, including ubiquinone (CoQ) isoprene intermediates and presents them directly to COQ7, therefore facilitating the COQ7-mediated hydroxylase step. Participates in the biosynthesis of coenzyme Q, also named ubiquinone, an essential lipid-soluble electron transporter for aerobic cellular respiration. The polypeptide is Ubiquinone biosynthesis protein COQ9-A, mitochondrial (coq9-a) (Xenopus laevis (African clawed frog)).